Consider the following 471-residue polypeptide: Glutamate--tRNA ligase 1 (471 aa).

A 'HIGH' region motif is present at residues 15–25 (PSPTGYLHIGG). A 'KMSKS' region motif is present at residues 243–247 (KLSKR). Residue Lys246 participates in ATP binding.

The protein belongs to the class-I aminoacyl-tRNA synthetase family. Glutamate--tRNA ligase type 1 subfamily. Monomer.

It is found in the cytoplasm. It catalyses the reaction tRNA(Glu) + L-glutamate + ATP = L-glutamyl-tRNA(Glu) + AMP + diphosphate. Functionally, catalyzes the attachment of glutamate to tRNA(Glu) in a two-step reaction: glutamate is first activated by ATP to form Glu-AMP and then transferred to the acceptor end of tRNA(Glu). In Dinoroseobacter shibae (strain DSM 16493 / NCIMB 14021 / DFL 12), this protein is Glutamate--tRNA ligase 1.